A 388-amino-acid chain; its full sequence is MGRARRFQWPLLLLWAAAAGPGTAQEVQTENVTVAEGGVAEITCRLHQYDGSIVVIQNPARQTLFFNGTRALKDERFQLEEFSPRRVRIRLSDARLEDEGGYFCQLYTEDTHHQIATLTVLVAPENPVVEVREQAVEGGEVELSCLVPRSRPAAVLRWYRDRKELKGVSSGQENGKVWSVASTVRFRVDRKDDGGIVICEAQNQALPSGHSKQTQYVLDVQYSPTARIHASQAVVREGDTLVLTCAVTGNPRPNQIRWNRGNESLPERAEALGETLTLPGLVSADNGTYTCEAANKHGHARALYVLVVYDPGAVVEAQTSVPYAIVGGILALLVFLIICVLVGMVWCSVRQKGSYLTHEASGLDEQGEAREAFLNGSDGHKRKEEFFI.

The first 20 residues, 1–20 (MGRARRFQWPLLLLWAAAAG), serve as a signal peptide directing secretion. An Ig-like V-type domain is found at 21-119 (PGTAQEVQTE…DTHHQIATLT (99 aa)). Residues 25 to 324 (QEVQTENVTV…VEAQTSVPYA (300 aa)) are Extracellular-facing. N-linked (GlcNAc...) asparagine glycosylation is found at N31 and N67. Intrachain disulfides connect C44/C104, C145/C199, and C245/C291. Ig-like C2-type domains lie at 124-219 (PENP…YVLD) and 224-307 (PTAR…YVLV). N286 carries an N-linked (GlcNAc...) asparagine glycan. Residues 325–345 (IVGGILALLVFLIICVLVGMV) traverse the membrane as a helical segment. Residues 346 to 388 (WCSVRQKGSYLTHEASGLDEQGEAREAFLNGSDGHKRKEEFFI) lie on the Cytoplasmic side of the membrane. Phosphoserine is present on S361.

The protein belongs to the nectin family. In terms of assembly, monomer and homodimer. Post-translationally, N-glycosylated.

The protein localises to the membrane. In terms of biological role, involved in the cell-cell adhesion. Has calcium- and magnesium-independent cell-cell adhesion activity. May have tumor-suppressor activity. The protein is Cell adhesion molecule 4 (Cadm4) of Rattus norvegicus (Rat).